The sequence spans 448 residues: Probable glycine dehydrogenase (decarboxylating) subunit 1 (448 aa).

This sequence belongs to the GcvP family. N-terminal subunit subfamily. The glycine cleavage system is composed of four proteins: P, T, L and H. In this organism, the P 'protein' is a heterodimer of two subunits.

It carries out the reaction N(6)-[(R)-lipoyl]-L-lysyl-[glycine-cleavage complex H protein] + glycine + H(+) = N(6)-[(R)-S(8)-aminomethyldihydrolipoyl]-L-lysyl-[glycine-cleavage complex H protein] + CO2. In terms of biological role, the glycine cleavage system catalyzes the degradation of glycine. The P protein binds the alpha-amino group of glycine through its pyridoxal phosphate cofactor; CO(2) is released and the remaining methylamine moiety is then transferred to the lipoamide cofactor of the H protein. This is Probable glycine dehydrogenase (decarboxylating) subunit 1 from Geobacillus sp. (strain WCH70).